Here is a 299-residue protein sequence, read N- to C-terminus: Leucine zipper transcription factor-like protein 1 (299 aa).

Residues 96–296 (LKLQTDISEL…DLRKRLAQYE (201 aa)) adopt a coiled-coil conformation. Residues 145–299 (GTAELLNKEI…KRLAQYEPED (155 aa)) are interaction with BSS9.

This sequence belongs to the LZTFL1 family. In terms of assembly, self-associates. Interacts with BBS9; the interaction mediates the association of LZTL1 with the BBsome complex and regulates BBSome ciliary trafficking. Expressed in prostate, ovary, stomach, pancreas, esophagus, breast, liver, bladder, kidney, thyroid, colon and lung (at protein level). Down-regulated in multiple primary tumors (at protein level). Detected in testis, heart, skeletal muscle, thymus, spleen, small intestine, and peripheral blood leukocytes.

It is found in the cytoplasm. In terms of biological role, regulates ciliary localization of the BBSome complex. Together with the BBSome complex, controls SMO ciliary trafficking and contributes to the sonic hedgehog (SHH) pathway regulation. May play a role in neurite outgrowth. May have tumor suppressor function. This chain is Leucine zipper transcription factor-like protein 1 (LZTFL1), found in Homo sapiens (Human).